The sequence spans 588 residues: Intracellular maltogenic amylase (588 aa).

Ca(2+) contacts are provided by N149, S155, G174, and D176. The substrate site is built by H249 and R325. D327 serves as the catalytic Nucleophile. Residue E356 is the Proton donor of the active site. Residues 422–423 (HD), D467, and R471 each bind substrate.

It belongs to the glycosyl hydrolase 13 family. BbmA subfamily. As to quaternary structure, monomer or homodimer; in equilibrium. It depends on Ca(2+) as a cofactor.

It is found in the cytoplasm. Functionally, hydrolyzes beta-cyclodextrin to maltose and glucose, soluble starch to maltose and glucose, and pullulan to panose with trace amounts of maltose and glucose. It is also able to hydrolyze acarbose. Can also exhibit a transglycosylation activity transferring glucose or maltose to another moiety of sugars by forming alpha-(1,6)- and alpha-(1,3)-glycosidic linkages upon the hydrolysis of substrate at concentrations of 5% or higher. In Bacillus subtilis, this protein is Intracellular maltogenic amylase (bbmA).